Reading from the N-terminus, the 62-residue chain is Large ribosomal subunit protein bL28 (62 aa).

It belongs to the bacterial ribosomal protein bL28 family.

The protein is Large ribosomal subunit protein bL28 of Clostridioides difficile (strain 630) (Peptoclostridium difficile).